Consider the following 55-residue polypeptide: Cytochrome b-c1 complex subunit 9 (55 aa).

The Mitochondrial matrix segment spans residues 1-15; sequence MKVIYNTLFKRTSTY. The helical transmembrane segment at 16-41 threads the bilayer; that stretch reads AVAIIASAFFFERALDVTSVAIFEGI. At 42–55 the chain is on the chloroplast intermembrane side; that stretch reads NKGKLWKDIKGKYE.

The protein belongs to the UQCR10/QCR9 family. In terms of assembly, component of the ubiquinol-cytochrome c oxidoreductase (cytochrome b-c1 complex, complex III, CIII), a multisubunit enzyme composed of 3 respiratory subunits cytochrome b, cytochrome c1 and Rieske protein, 2 core protein subunits, and additional low-molecular weight protein subunits. The complex exists as an obligatory dimer and forms supercomplexes (SCs) in the inner mitochondrial membrane with cytochrome c oxidase (complex IV, CIV).

It localises to the mitochondrion inner membrane. Component of the ubiquinol-cytochrome c oxidoreductase, a multisubunit transmembrane complex that is part of the mitochondrial electron transport chain which drives oxidative phosphorylation. The respiratory chain contains 3 multisubunit complexes succinate dehydrogenase (complex II, CII), ubiquinol-cytochrome c oxidoreductase (cytochrome b-c1 complex, complex III, CIII) and cytochrome c oxidase (complex IV, CIV), that cooperate to transfer electrons derived from NADH and succinate to molecular oxygen, creating an electrochemical gradient over the inner membrane that drives transmembrane transport and the ATP synthase. The cytochrome b-c1 complex catalyzes electron transfer from ubiquinol to cytochrome c, linking this redox reaction to translocation of protons across the mitochondrial inner membrane, with protons being carried across the membrane as hydrogens on the quinol. In the process called Q cycle, 2 protons are consumed from the matrix, 4 protons are released into the intermembrane space and 2 electrons are passed to cytochrome c. This is Cytochrome b-c1 complex subunit 9 (ox) from Drosophila melanogaster (Fruit fly).